Reading from the N-terminus, the 506-residue chain is uncharacterized protein (506 aa).

282 to 289 provides a ligand contact to ATP; that stretch reads GIQGTGKS.

This sequence belongs to the AAA ATPase family. Highly divergent.

It localises to the plastid. The protein localises to the chloroplast. This is an uncharacterized protein from Guillardia theta (Cryptophyte).